The following is a 296-amino-acid chain: Phosphatidylglycerol--prolipoprotein diacylglyceryl transferase (296 aa).

4 consecutive transmembrane segments (helical) span residues 28–48 (WYGL…IYLA), 72–92 (FALY…ILFY), 110–130 (GGLA…IFSW), and 139–159 (LTFL…AFMI). Arg-160 contacts a 1,2-diacyl-sn-glycero-3-phospho-(1'-sn-glycerol). A run of 3 helical transmembrane segments spans residues 197-217 (VQLY…FLSY), 226-246 (GWVT…AEFF), and 263-283 (GQIL…ACFL).

Belongs to the Lgt family.

The protein resides in the cell inner membrane. The catalysed reaction is L-cysteinyl-[prolipoprotein] + a 1,2-diacyl-sn-glycero-3-phospho-(1'-sn-glycerol) = an S-1,2-diacyl-sn-glyceryl-L-cysteinyl-[prolipoprotein] + sn-glycerol 1-phosphate + H(+). The protein operates within protein modification; lipoprotein biosynthesis (diacylglyceryl transfer). Functionally, catalyzes the transfer of the diacylglyceryl group from phosphatidylglycerol to the sulfhydryl group of the N-terminal cysteine of a prolipoprotein, the first step in the formation of mature lipoproteins. This Chlamydia caviae (strain ATCC VR-813 / DSM 19441 / 03DC25 / GPIC) (Chlamydophila caviae) protein is Phosphatidylglycerol--prolipoprotein diacylglyceryl transferase.